Consider the following 442-residue polypeptide: Mirror-image polydactyly gene 1 protein (442 aa).

The interval 1-39 is disordered; the sequence is MENWSKDITHSYLEQETTGINKSTQPDEQLTMNSEKSMH. A compositionally biased stretch (polar residues) spans 12–35; it reads YLEQETTGINKSTQPDEQLTMNSE. 2 coiled-coil regions span residues 107–212 and 253–435; these read SDKE…LENI and ECKM…KVGT.

In terms of tissue distribution, expressed very weakly in heart, liver, skeletal muscle, kidney, pancreas and fetal kidney. Not detected in brain, placenta and lung.

In Homo sapiens (Human), this protein is Mirror-image polydactyly gene 1 protein (MIPOL1).